A 329-amino-acid chain; its full sequence is Biotin synthase (329 aa).

The Radical SAM core domain maps to 48 to 278; sequence FVGDKVFLCS…TKRISICGGR (231 aa). Residues cysteine 66, cysteine 70, and cysteine 73 each coordinate [4Fe-4S] cluster. Positions 143 and 203 each coordinate [2Fe-2S] cluster.

This sequence belongs to the radical SAM superfamily. Biotin synthase family. In terms of assembly, homodimer. [4Fe-4S] cluster serves as cofactor. [2Fe-2S] cluster is required as a cofactor.

It carries out the reaction (4R,5S)-dethiobiotin + (sulfur carrier)-SH + 2 reduced [2Fe-2S]-[ferredoxin] + 2 S-adenosyl-L-methionine = (sulfur carrier)-H + biotin + 2 5'-deoxyadenosine + 2 L-methionine + 2 oxidized [2Fe-2S]-[ferredoxin]. It participates in cofactor biosynthesis; biotin biosynthesis; biotin from 7,8-diaminononanoate: step 2/2. In terms of biological role, catalyzes the conversion of dethiobiotin (DTB) to biotin by the insertion of a sulfur atom into dethiobiotin via a radical-based mechanism. In Geotalea daltonii (strain DSM 22248 / JCM 15807 / FRC-32) (Geobacter daltonii), this protein is Biotin synthase.